Here is a 296-residue protein sequence, read N- to C-terminus: tRNA dimethylallyltransferase (296 aa).

Gly-2–Thr-9 serves as a coordination point for ATP. Thr-4 to Thr-9 serves as a coordination point for substrate. 3 interaction with substrate tRNA regions span residues Asp-27–Leu-30, Gln-151–Arg-155, and Arg-232–Arg-237.

It belongs to the IPP transferase family. Monomer. The cofactor is Mg(2+).

The catalysed reaction is adenosine(37) in tRNA + dimethylallyl diphosphate = N(6)-dimethylallyladenosine(37) in tRNA + diphosphate. Functionally, catalyzes the transfer of a dimethylallyl group onto the adenine at position 37 in tRNAs that read codons beginning with uridine, leading to the formation of N6-(dimethylallyl)adenosine (i(6)A). In Shewanella sp. (strain MR-4), this protein is tRNA dimethylallyltransferase.